The primary structure comprises 66 residues: Large ribosomal subunit protein bL35 (66 aa).

Positions 1 to 16 (MPKQKTHRASAKRFKR) are enriched in basic residues. Positions 1-21 (MPKQKTHRASAKRFKRTGSGG) are disordered.

The protein belongs to the bacterial ribosomal protein bL35 family.

The chain is Large ribosomal subunit protein bL35 from Streptococcus agalactiae serotype Ia (strain ATCC 27591 / A909 / CDC SS700).